Consider the following 1056-residue polypeptide: E3 SUMO-protein ligase ZNF451 (1056 aa).

The segment at 1-39 (MGDPGPEIIESVPPAGPEASESTTDENEDDIQFVSEGPL) is disordered. Residues 1–246 (MGDPGPEIIE…AADGHSNSLL (246 aa)) are sufficient for E3 SUMO-protein ligase activity. The segment at 1–344 (MGDPGPEIIE…RVRCQNAGPV (344 aa)) is important for interaction with SUMO1 and SUMO2. An interaction with SUMO2 1 region spans residues 30-37 (DIQFVSEG). Positions 38-41 (PLRP) match the PLRP motif. Residues 42-50 (VLEYIDLVS) are interaction with SUMO2 2. Residues Lys75, Lys77, Lys106, Lys139, and Lys153 each participate in a glycyl lysine isopeptide (Lys-Gly) (interchain with G-Cter in SUMO2) cross-link. Ser155 bears the Phosphoserine mark. Arg158 carries the post-translational modification Omega-N-methylarginine. Residue Lys167 forms a Glycyl lysine isopeptide (Lys-Gly) (interchain with G-Cter in SUMO2) linkage. Residues 168–521 (PILCPIMHCN…HMSRFHGGAH (354 aa)) are important for interaction with SMAD4. The segment at 169 to 195 (ILCPIMHCNKEFDNGHLLLGHLKRFDH) adopts a C2H2-type 1 zinc-finger fold. A C2H2-type 2; degenerate zinc finger spans residues 212–234 (FACAVCYEHFVTQQQYKDHLLSR). Residues 253 to 277 (YACPQCFLLFSTKDECLKHMSTKNH) form a C2H2-type 3 zinc finger. Glycyl lysine isopeptide (Lys-Gly) (interchain with G-Cter in SUMO2) cross-links involve residues Lys270, Lys275, Lys283, Lys288, Lys301, and Lys309. The segment at 315–338 (VKCVACHQTLRSHMELTAHFRVRC) adopts a C2H2-type 4; atypical zinc-finger fold. A C2H2-type 5 zinc finger spans residues 362-385 (GYCSDCNQVFMDVASTQSHKNSGH). Residue Lys420 forms a Glycyl lysine isopeptide (Lys-Gly) (interchain with G-Cter in SUMO2) linkage. Ser429 carries the post-translational modification Phosphoserine. Lys431 is covalently cross-linked (Glycyl lysine isopeptide (Lys-Gly) (interchain with G-Cter in SUMO2)). 2 consecutive C2H2-type zinc fingers follow at residues 494–517 (YKCV…SRFH) and 527–550 (FWCR…TEFH). Residues Lys539 and Lys583 each participate in a glycyl lysine isopeptide (Lys-Gly) (interchain with G-Cter in SUMO2) cross-link. The C2H2-type 8; atypical zinc finger occupies 604 to 629 (WQCRICEDMFESQECVKQHCMSLTSH). 2 C2H2-type zinc fingers span residues 634–657 (YSCA…QDEH) and 665–688 (YFCG…KEHH). Lys645 participates in a covalent cross-link: Glycyl lysine isopeptide (Lys-Gly) (interchain with G-Cter in SUMO2). Lys704 participates in a covalent cross-link: Glycyl lysine isopeptide (Lys-Gly) (interchain with G-Cter in SUMO1); alternate. Lys704 is covalently cross-linked (Glycyl lysine isopeptide (Lys-Gly) (interchain with G-Cter in SUMO2); alternate). Residues Lys729 and Lys746 each participate in a glycyl lysine isopeptide (Lys-Gly) (interchain with G-Cter in SUMO2) cross-link. 2 C2H2-type zinc fingers span residues 751-774 (FRCS…CQVH) and 787-810 (IKCG…HRKH). Residues Lys788, Lys815, Lys843, Lys849, Lys947, Lys988, and Lys989 each participate in a glycyl lysine isopeptide (Lys-Gly) (interchain with G-Cter in SUMO2) cross-link. 2 disordered regions span residues 806-830 (FHRK…STCQ) and 839-858 (EKNL…KGAE). The span at 849–858 (KHSDVEKGAE) shows a compositional bias: basic and acidic residues. Positions 1019–1045 (KECDSDDSSGMKGSPAEELRATEDVEL) are disordered. Basic and acidic residues predominate over residues 1033 to 1045 (PAEELRATEDVEL). The tract at residues 1045 to 1056 (LEEAIRRSLEEM) is important for ubiquitin binding.

This sequence belongs to the krueppel C2H2-type zinc-finger protein family. As to quaternary structure, homooligomer. Interacts (via N-terminal region) with SUMO1. Interacts (via N-terminal region) with SUMO2. Interacts simultaneously with two SUMO2 chains. Identified in a complex with SUMO2 and UBE2I/UBC9, where one ZNF451 interacts with one UBE2I/UBC9 and two SUMO2 chains, one bound to the UBE2I/UBC9 active site and the other to another region of the same UBE2I/UBC9 molecule. Interacts (via C-terminus) with ubiquitin. Interacts (via N-terminal zinc-finger domains) with SMAD4 (via MH2 domain). Interacts with SMAD2 and SMAD3. Identified in a complex that contains at least ZNF451, SMAD2, SMAD3 and SMAD4. Interacts with EP300. Inhibits interaction between EP300 and the SMAD4 complex. Interacts with SIMC1. In terms of processing, sumoylated. Predominantly sumoylated on the N-terminal region that is important for interaction with SUMO1 and SUMO2. Sumoylation is important for localization in nuclear granules; desumoylation leads to diffuse nucleoplasmic location. Autosumoylated (in vitro). Sumoylation enhances E3 SUMO-protein ligase activity.

The protein resides in the nucleus. The protein localises to the PML body. It is found in the nucleoplasm. It functions in the pathway protein modification; protein sumoylation. Its function is as follows. E3 SUMO-protein ligase; has a preference for SUMO2 and SUMO3 and facilitates UBE2I/UBC9-mediated sumoylation of target proteins. Plays a role in protein SUMO2 modification in response to stress caused by DNA damage and by proteasome inhibitors (in vitro). Required for MCM4 sumoylation. Has no activity with SUMO1. Preferentially transfers an additional SUMO2 chain onto the SUMO2 consensus site 'Lys-11'. Negatively regulates transcriptional activation mediated by the SMAD4 complex in response to TGF-beta signaling. Inhibits EP300-mediated acetylation of histone H3 at 'Lys-9'. Plays a role in regulating the transcription of AR targets. This is E3 SUMO-protein ligase ZNF451 (Znf451) from Mus musculus (Mouse).